A 356-amino-acid polypeptide reads, in one-letter code: Magnesium-protoporphyrin IX monomethyl ester [oxidative] cyclase (356 aa).

This sequence belongs to the AcsF family. The cofactor is Fe cation.

The enzyme catalyses Mg-protoporphyrin IX 13-monomethyl ester + 3 NADPH + 3 O2 + 2 H(+) = 3,8-divinyl protochlorophyllide a + 3 NADP(+) + 5 H2O. It participates in porphyrin-containing compound metabolism; chlorophyll biosynthesis (light-independent). Its function is as follows. Catalyzes the formation of the isocyclic ring in chlorophyll biosynthesis. Mediates the cyclase reaction, which results in the formation of divinylprotochlorophyllide (Pchlide) characteristic of all chlorophylls from magnesium-protoporphyrin IX 13-monomethyl ester (MgPMME). The sequence is that of Magnesium-protoporphyrin IX monomethyl ester [oxidative] cyclase from Parasynechococcus marenigrum (strain WH8102).